The following is a 676-amino-acid chain: Electrogenic aspartate/glutamate antiporter SLC25A13, mitochondrial (676 aa).

Alanine 2 carries the N-acetylalanine modification. Residues 2 to 295 (AAAKVALTKR…TLADIERIAP (294 aa)) are regulatory N-terminal domain. Over 2-332 (AAAKVALTKR…LLQLAESAYR (331 aa)) the chain is Mitochondrial intermembrane. Lysine 18 bears the N6-acetyllysine mark. EF-hand domains lie at 51-86 (SQPNPKTVELLSGVVDQTKDGLISFQEFVAFESVLC), 87-122 (APDALFMVAFQLFDKAGKGEVTFEDVKQIFGQTTIH), 123-157 (QHIPFNWDSEFVQLHFGKERKRHLTYAEFTQFLLE), and 158-193 (IQLEHAKQAFVQRDNAKTGKVSAIDFRDIMVTIRPH). Positions 66, 68, 70, 72, and 77 each coordinate Ca(2+). The segment at 296–311 (LEEGMLPFNLAEAQRQ) is linker loop domain. Residues 322-613 (FLLQLAESAY…LQRWFYVDFG (292 aa)) form a carrier domain region. Solcar repeat units follow at residues 327-419 (AESA…VRDK), 427-511 (VPLL…VKAS), and 519-607 (VSPG…LQRW). The chain crosses the membrane as a helical span at residues 333-350 (FGLGSIAGAVGATAVYPI). Over 351–393 (DLVKTRMQNQRSTGSFVGELMYKNSFDCFKKVLRYEGFFGLYR) the chain is Mitochondrial matrix. N6-acetyllysine is present on residues lysine 354 and lysine 373. Residues 394 to 413 (GLLPQLLGVAPEKAIKLTVN) traverse the membrane as a helical segment. Residues 414-436 (DFVRDKFMHKDGSVPLLAEIFAG) are Mitochondrial intermembrane-facing. A helical transmembrane segment spans residues 437–450 (GCAGGSQVIFTNPL). Residues 451–485 (EIVKIRLQVAGEITTGPRVSALSVVRDLGFFGIYK) lie on the Mitochondrial matrix side of the membrane. At lysine 454 the chain carries N6-methyllysine. Residue lysine 485 is modified to N6-acetyllysine; alternate. The residue at position 485 (lysine 485) is an N6-succinyllysine; alternate. Residues 486 to 505 (GAKACFLRDIPFSAIYFPCY) traverse the membrane as a helical segment. Topologically, residues 506 to 524 (AHVKASFANEDGQVSPGSL) are mitochondrial intermembrane. Residues 525-542 (LLAGAIAGMPAASLVTPA) traverse the membrane as a helical segment. At 543 to 581 (DVIKTRLQVAARAGQTTYNGVTDCFRKILREEGPKALWK) the chain is on the mitochondrial matrix side. Lysine 581 carries the post-translational modification N6-succinyllysine. A helical membrane pass occupies residues 582–601 (GVAARVFRSSPQFGVTLLTY). Topologically, residues 602–676 (ELLQRWFYVD…STSKVTAGDS (75 aa)) are mitochondrial intermembrane. The C-terminal domain stretch occupies residues 614–676 (GVKPVGSEPV…STSKVTAGDS (63 aa)). Lysine 663 bears the N6-acetyllysine mark. Serine 667 is modified (phosphoserine).

Belongs to the mitochondrial carrier (TC 2.A.29) family. As to quaternary structure, homodimer (via N-terminus). In terms of tissue distribution, at 10.5 dpc, expressed in branchial arches, a well as in the limb and tail buds. At 13.5 dpc expression is predominant in epithelial structures and the forebrain, kidney and liver. Expression in liver is maintained into adulthood.

It localises to the mitochondrion inner membrane. It carries out the reaction L-aspartate(in) + L-glutamate(out) + H(+)(out) = L-aspartate(out) + L-glutamate(in) + H(+)(in). It catalyses the reaction 3-sulfino-L-alanine(out) + L-glutamate(in) + H(+)(in) = 3-sulfino-L-alanine(in) + L-glutamate(out) + H(+)(out). The enzyme catalyses 3-sulfino-L-alanine(out) + L-aspartate(in) = 3-sulfino-L-alanine(in) + L-aspartate(out). Mitochondrial electrogenic aspartate/glutamate antiporter that favors efflux of aspartate and entry of glutamate and proton within the mitochondria as part of the malate-aspartate shuttle. Also mediates the uptake of L-cysteinesulfinate (3-sulfino-L-alanine) by mitochondria in exchange of L-glutamate and proton. Can also exchange L-cysteinesulfinate with aspartate in their anionic form without any proton translocation. Lacks transport activity towards gamma-aminobutyric acid (GABA). In Mus musculus (Mouse), this protein is Electrogenic aspartate/glutamate antiporter SLC25A13, mitochondrial.